The primary structure comprises 102 residues: NADH-quinone oxidoreductase subunit K 2 (102 aa).

Helical transmembrane passes span 6–26, 30–50, and 66–86; these read LEAF…GIIA, LVTV…ALVG, and FIIA…IAIF.

This sequence belongs to the complex I subunit 4L family. In terms of assembly, NDH-1 is composed of 14 different subunits. Subunits NuoA, H, J, K, L, M, N constitute the membrane sector of the complex.

It is found in the cell inner membrane. It catalyses the reaction a quinone + NADH + 5 H(+)(in) = a quinol + NAD(+) + 4 H(+)(out). Its function is as follows. NDH-1 shuttles electrons from NADH, via FMN and iron-sulfur (Fe-S) centers, to quinones in the respiratory chain. The immediate electron acceptor for the enzyme in this species is believed to be ubiquinone. Couples the redox reaction to proton translocation (for every two electrons transferred, four hydrogen ions are translocated across the cytoplasmic membrane), and thus conserves the redox energy in a proton gradient. This chain is NADH-quinone oxidoreductase subunit K 2, found in Aquifex aeolicus (strain VF5).